A 293-amino-acid chain; its full sequence is Iron-sulfur cluster transfer protein Nubpl (293 aa).

The CXXC motif probably involved in coordinating iron-sulfur cluster binding stretch occupies residues 214 to 217; sequence CQNC.

Belongs to the Mrp/NBP35 ATP-binding proteins family. In terms of assembly, homodimer; dimerization is not reliant on iron-sulfur cluster binding. It depends on [4Fe-4S] cluster as a cofactor.

It localises to the mitochondrion membrane. In terms of biological role, iron-sulfur cluster transfer protein involved in the assembly of the mitochondrial membrane respiratory chain NADH dehydrogenase (Complex I). May deliver one or more Fe-S clusters to complex I subunits. Alleviates pausing in mitochondrial DNA (mtDNA) replication at slow zone 2. May be involved in mtDNA-helicase-mediated mtDNA unwinding and replication by transferring iron-sulfur clusters. The polypeptide is Iron-sulfur cluster transfer protein Nubpl (Drosophila melanogaster (Fruit fly)).